We begin with the raw amino-acid sequence, 502 residues long: Protein GIS3 (502 aa).

It is found in the cytoplasm. The protein resides in the nucleus. In Saccharomyces cerevisiae (strain ATCC 204508 / S288c) (Baker's yeast), this protein is Protein GIS3 (GIS3).